Reading from the N-terminus, the 291-residue chain is Elongation factor Ts (291 aa).

Positions 78–81 (TDFV) are involved in Mg(2+) ion dislocation from EF-Tu.

Belongs to the EF-Ts family.

It is found in the cytoplasm. Its function is as follows. Associates with the EF-Tu.GDP complex and induces the exchange of GDP to GTP. It remains bound to the aminoacyl-tRNA.EF-Tu.GTP complex up to the GTP hydrolysis stage on the ribosome. This chain is Elongation factor Ts, found in Ureaplasma urealyticum serovar 10 (strain ATCC 33699 / Western).